A 436-amino-acid chain; its full sequence is Hydrogenobyrinate a,c-diamide synthase (436 aa).

A GATase cobBQ-type domain is found at 244-435 (RIAVARDDAF…MHVIDFSGEA (192 aa)). The active-site Nucleophile is Cys327.

The protein belongs to the CobB/CbiA family. It depends on Mg(2+) as a cofactor.

The enzyme catalyses hydrogenobyrinate + 2 L-glutamine + 2 ATP + 2 H2O = hydrogenobyrinate a,c-diamide + 2 L-glutamate + 2 ADP + 2 phosphate + 2 H(+). It participates in cofactor biosynthesis; adenosylcobalamin biosynthesis; cob(II)yrinate a,c-diamide from precorrin-2 (aerobic route): step 9/10. Functionally, catalyzes the ATP-dependent amidation of the two carboxylate groups at positions a and c of hydrogenobyrinate, using either L-glutamine or ammonia as the nitrogen source. This chain is Hydrogenobyrinate a,c-diamide synthase, found in Brucella abortus biovar 1 (strain 9-941).